The following is a 250-amino-acid chain: 5'-nucleotidase SurE (250 aa).

Asp8, Asp9, Ser39, and Asn92 together coordinate a divalent metal cation.

It belongs to the SurE nucleotidase family. The cofactor is a divalent metal cation.

It is found in the cytoplasm. The enzyme catalyses a ribonucleoside 5'-phosphate + H2O = a ribonucleoside + phosphate. Functionally, nucleotidase that shows phosphatase activity on nucleoside 5'-monophosphates. The sequence is that of 5'-nucleotidase SurE from Vibrio cholerae serotype O1 (strain ATCC 39315 / El Tor Inaba N16961).